The primary structure comprises 151 residues: Deoxyuridine 5'-triphosphate nucleotidohydrolase (151 aa).

Substrate-binding positions include 70–72, N83, 87–89, and M97; these read RSG and LID.

The protein belongs to the dUTPase family. Mg(2+) is required as a cofactor.

The enzyme catalyses dUTP + H2O = dUMP + diphosphate + H(+). It participates in pyrimidine metabolism; dUMP biosynthesis; dUMP from dCTP (dUTP route): step 2/2. Its function is as follows. This enzyme is involved in nucleotide metabolism: it produces dUMP, the immediate precursor of thymidine nucleotides and it decreases the intracellular concentration of dUTP so that uracil cannot be incorporated into DNA. This is Deoxyuridine 5'-triphosphate nucleotidohydrolase from Actinobacillus pleuropneumoniae serotype 7 (strain AP76).